Reading from the N-terminus, the 483-residue chain is Probable pectate lyase 12 (483 aa).

An N-terminal signal peptide occupies residues 1–24 (MMLQRSCIVLFFSLFLLVPQMVFS). Residues Asn27 and Asn50 are each glycosylated (N-linked (GlcNAc...) asparagine). Residues Asp220, Asp244, and Asp248 each contribute to the Ca(2+) site. Arg300 is an active-site residue.

The protein belongs to the polysaccharide lyase 1 family. It depends on Ca(2+) as a cofactor.

The enzyme catalyses Eliminative cleavage of (1-&gt;4)-alpha-D-galacturonan to give oligosaccharides with 4-deoxy-alpha-D-galact-4-enuronosyl groups at their non-reducing ends.. It functions in the pathway glycan metabolism; pectin degradation; 2-dehydro-3-deoxy-D-gluconate from pectin: step 2/5. In Arabidopsis thaliana (Mouse-ear cress), this protein is Probable pectate lyase 12.